A 185-amino-acid polypeptide reads, in one-letter code: Ribosome maturation factor RimM (185 aa).

The 80-residue stretch at 106–185 (EGDYYWKDLM…SIEVDWDPGF (80 aa)) folds into the PRC barrel domain.

This sequence belongs to the RimM family. In terms of assembly, binds ribosomal protein uS19.

It is found in the cytoplasm. In terms of biological role, an accessory protein needed during the final step in the assembly of 30S ribosomal subunit, possibly for assembly of the head region. Essential for efficient processing of 16S rRNA. May be needed both before and after RbfA during the maturation of 16S rRNA. It has affinity for free ribosomal 30S subunits but not for 70S ribosomes. The protein is Ribosome maturation factor RimM of Shigella dysenteriae serotype 1 (strain Sd197).